Reading from the N-terminus, the 208-residue chain is Large ribosomal subunit protein uL4 (208 aa).

The protein belongs to the universal ribosomal protein uL4 family. In terms of assembly, part of the 50S ribosomal subunit.

Its function is as follows. One of the primary rRNA binding proteins, this protein initially binds near the 5'-end of the 23S rRNA. It is important during the early stages of 50S assembly. It makes multiple contacts with different domains of the 23S rRNA in the assembled 50S subunit and ribosome. Forms part of the polypeptide exit tunnel. This is Large ribosomal subunit protein uL4 from Anaplasma marginale (strain Florida).